Consider the following 329-residue polypeptide: UDP-2,3-diacylglucosamine pyrophosphatase LpxG (329 aa).

A helical membrane pass occupies residues 2-24; the sequence is FVSVGITASLTTILAAPVLTWVW. A divalent metal cation contacts are provided by Asp59, His61, Asp91, Asn123, His257, and His259.

The protein belongs to the metallophosphoesterase superfamily. LpxG family. Requires Mn(2+) as cofactor.

It is found in the cell inner membrane. It carries out the reaction UDP-2,3-diacyl-alpha-D-glucosamine + H2O = 2,3-diacyl-alpha-D-glucosaminyl 1-phosphate + UMP + 2 H(+). It participates in glycolipid biosynthesis; lipid IV(A) biosynthesis. Its function is as follows. Hydrolyzes the pyrophosphate bond of UDP-2,3-diacylglucosamine to form 2,3-diacylglucosamine 1-phosphate (lipid X) and UMP by catalyzing the attack of water at the alpha-P atom. Involved in the biosynthesis of lipid A, a phosphorylated glycolipid that anchors the lipooligosaccharide (LOS) to the outer membrane of the cell. Can functionally complement lpxH deficiency in E.coli. Overexpression of LpxG results in toxic accumulation of lipid X and profoundly reduces the infectivity of C.trachomatis. Can utilize UDP-2-N,3-O-bis((3R)-3-hydroxytetradecanoyl)-alpha-D-glucosamine as substrate in vitro, but the substrate is likely UDP-2-N-((3R)-3-hydroxyicosanoyl),3-O-(tetradecanoyl)-alpha-D-glucosamine in vivo. This Chlamydia trachomatis serovar D (strain ATCC VR-885 / DSM 19411 / UW-3/Cx) protein is UDP-2,3-diacylglucosamine pyrophosphatase LpxG.